The following is a 313-amino-acid chain: Sororin-like protein 1 (313 aa).

The FGF motif signature appears at 44–46 (FGF). Positions 105 to 287 (ADENQQSVPT…NDNLKELTPG (183 aa)) are disordered. Residues 107–118 (ENQQSVPTVSIA) show a composition bias toward polar residues. The segment covering 123 to 134 (PELPPSSSPLLP) has biased composition (pro residues). Residues 135–154 (PNGSESSSPIPLSLLSTSSL) show a composition bias toward low complexity. The segment covering 155-170 (QQRKITPSNLSNTSKP) has biased composition (polar residues). Positions 184-196 (HGHHLTRLRKKRR) are enriched in basic residues. Basic and acidic residues predominate over residues 249 to 264 (EKKILKTYHSQDKDTA). Positions 288 to 310 (KKEYLKSIKKYFQDVDDYQLHVV) are C-terminal Sororin domain.

Belongs to the sororin family. Interacts with Pds5 and Psm3.

It localises to the nucleus. Its function is as follows. Regulator of sister chromatid cohesion in mitosis stabilizing cohesin complex association with chromatin. Antagonizes the action of wpl1 which stimulates cohesin dissociation from chromatin. Cohesion ensures that chromosome partitioning is accurate in dividing cells and may play an important role in DNA repair. This Schizosaccharomyces pombe (strain 972 / ATCC 24843) (Fission yeast) protein is Sororin-like protein 1.